Here is a 469-residue protein sequence, read N- to C-terminus: Ribulose bisphosphate carboxylase large chain (469 aa).

A propeptide spanning residues 1 to 2 (MS) is cleaved from the precursor. An N-acetylproline modification is found at Pro3. N6,N6,N6-trimethyllysine is present on Lys14. Residues Asn123 and Thr173 each contribute to the substrate site. Lys175 serves as the catalytic Proton acceptor. Lys177 is a substrate binding site. Mg(2+) contacts are provided by Lys201, Asp203, and Glu204. Residue Lys201 is modified to N6-carboxylysine. His294 acts as the Proton acceptor in catalysis. Residues Arg295, His327, and Ser379 each contribute to the substrate site.

This sequence belongs to the RuBisCO large chain family. Type I subfamily. Heterohexadecamer of 8 large chains and 8 small chains; disulfide-linked. The disulfide link is formed within the large subunit homodimers. Requires Mg(2+) as cofactor. The disulfide bond which can form in the large chain dimeric partners within the hexadecamer appears to be associated with oxidative stress and protein turnover.

Its subcellular location is the plastid. It localises to the chloroplast. It carries out the reaction 2 (2R)-3-phosphoglycerate + 2 H(+) = D-ribulose 1,5-bisphosphate + CO2 + H2O. The catalysed reaction is D-ribulose 1,5-bisphosphate + O2 = 2-phosphoglycolate + (2R)-3-phosphoglycerate + 2 H(+). In terms of biological role, ruBisCO catalyzes two reactions: the carboxylation of D-ribulose 1,5-bisphosphate, the primary event in carbon dioxide fixation, as well as the oxidative fragmentation of the pentose substrate in the photorespiration process. Both reactions occur simultaneously and in competition at the same active site. This chain is Ribulose bisphosphate carboxylase large chain, found in Atriplex patula (Common orache).